The sequence spans 117 residues: Ribosome-binding factor A (117 aa).

It belongs to the RbfA family. In terms of assembly, monomer. Binds 30S ribosomal subunits, but not 50S ribosomal subunits or 70S ribosomes.

The protein localises to the cytoplasm. In terms of biological role, one of several proteins that assist in the late maturation steps of the functional core of the 30S ribosomal subunit. Associates with free 30S ribosomal subunits (but not with 30S subunits that are part of 70S ribosomes or polysomes). Required for efficient processing of 16S rRNA. May interact with the 5'-terminal helix region of 16S rRNA. The chain is Ribosome-binding factor A from Bacillus subtilis (strain 168).